The sequence spans 327 residues: Phosphate acyltransferase (327 aa).

This sequence belongs to the PlsX family. Homodimer. Probably interacts with PlsY.

The protein localises to the cytoplasm. It catalyses the reaction a fatty acyl-[ACP] + phosphate = an acyl phosphate + holo-[ACP]. It functions in the pathway lipid metabolism; phospholipid metabolism. In terms of biological role, catalyzes the reversible formation of acyl-phosphate (acyl-PO(4)) from acyl-[acyl-carrier-protein] (acyl-ACP). This enzyme utilizes acyl-ACP as fatty acyl donor, but not acyl-CoA. The polypeptide is Phosphate acyltransferase (Thermotoga neapolitana (strain ATCC 49049 / DSM 4359 / NBRC 107923 / NS-E)).